The chain runs to 605 residues: ATP-dependent RNA helicase DBP3 (605 aa).

The segment at 1–124 (MSAEELVASP…TPALSKKQQK (124 aa)) is disordered. Residues 54–66 (KDKKDKKEKKDKK) are compositionally biased toward basic residues. Residues 104–114 (PVSTATPTESE) are compositionally biased toward polar residues. The Q motif signature appears at 175-201 (LSIRDLPINSKLQPFLNKFEKPTPIQA). Positions 204-391 (WPALLSKKDV…STFLNNPLRI (188 aa)) constitute a Helicase ATP-binding domain. 217 to 224 (AETGSGKT) lines the ATP pocket. The short motif at 336–339 (DEAD) is the DEAD box element. The region spanning 424-575 (HLKAHLKVHP…EIPKEMDRFP (152 aa)) is the Helicase C-terminal domain.

Belongs to the DEAD box helicase family. DDX5/DBP2 subfamily.

The protein resides in the nucleus. Its subcellular location is the nucleolus. It carries out the reaction ATP + H2O = ADP + phosphate + H(+). ATP-dependent RNA helicase required for 60S ribosomal subunit synthesis. Involved in efficient pre-rRNA processing, predominantly at site A3, which is necessary for the normal formation of 25S and 5.8S rRNAs. The sequence is that of ATP-dependent RNA helicase DBP3 (DBP3) from Cryptococcus neoformans var. neoformans serotype D (strain JEC21 / ATCC MYA-565) (Filobasidiella neoformans).